The chain runs to 64 residues: Thrombin-like enzyme collinein-4 (64 aa).

2 cysteine pairs are disulfide-bonded: Cys5–Cys23 and Cys34–Cys51.

Monomer. Expressed by the vanom gland.

The protein resides in the secreted. Its function is as follows. Thrombin-like snake venom serine protease. This Crotalus durissus collilineatus (Brazilian rattlesnake) protein is Thrombin-like enzyme collinein-4.